A 154-amino-acid chain; its full sequence is Large ribosomal subunit protein bL9 (154 aa).

Belongs to the bacterial ribosomal protein bL9 family.

Binds to the 23S rRNA. The chain is Large ribosomal subunit protein bL9 from Buchnera aphidicola subsp. Baizongia pistaciae (strain Bp).